We begin with the raw amino-acid sequence, 331 residues long: Ribonuclease Z (331 aa).

The Zn(2+) site is built by His56, His58, Asp60, His61, His162, Asp235, and His297. The Proton acceptor role is filled by Asp60.

It belongs to the RNase Z family. In terms of assembly, homodimer. Requires Zn(2+) as cofactor.

It catalyses the reaction Endonucleolytic cleavage of RNA, removing extra 3' nucleotides from tRNA precursor, generating 3' termini of tRNAs. A 3'-hydroxy group is left at the tRNA terminus and a 5'-phosphoryl group is left at the trailer molecule.. Its function is as follows. Zinc phosphodiesterase, which displays some tRNA 3'-processing endonuclease activity. Probably involved in tRNA maturation, by removing a 3'-trailer from precursor tRNA. The sequence is that of Ribonuclease Z (rnz) from Deinococcus radiodurans (strain ATCC 13939 / DSM 20539 / JCM 16871 / CCUG 27074 / LMG 4051 / NBRC 15346 / NCIMB 9279 / VKM B-1422 / R1).